The following is a 2016-amino-acid chain: Cell adhesion molecule Dscam1 (2016 aa).

An N-terminal signal peptide occupies residues methionine 1–alanine 28. The Extracellular portion of the chain corresponds to alanine 29–asparagine 1618. 9 Ig-like C2-type domains span residues proline 39–arginine 134, alanine 138–serine 230, proline 247–threonine 338, proline 342–lysine 421, proline 428–asparagine 522, proline 527–glutamine 613, proline 618–asparagine 712, proline 715–serine 807, and proline 812–asparagine 904. Asparagine 53 carries an N-linked (GlcNAc...) asparagine glycan. Cysteines 61 and 117 form a disulfide. Aspartate 144, asparagine 146, and leucine 161 together coordinate Zn(2+). 13 disulfides stabilise this stretch: cysteine 160–cysteine 217, cysteine 160–threonine 219, cysteine 160–lysine 220, cysteine 269–cysteine 322, proline 270–valine 323, alanine 276–glycine 329, cysteine 364–cysteine 405, cysteine 450–cysteine 506, cysteine 547–cysteine 596, cysteine 640–cysteine 694, valine 641–cysteine 694, valine 641–isoleucine 695, and cysteine 736–cysteine 790. N-linked (GlcNAc...) asparagine glycosylation occurs at asparagine 325. Asparagine 492 and asparagine 577 each carry an N-linked (GlcNAc...) asparagine glycan. The N-linked (GlcNAc...) asparagine glycan is linked to asparagine 820. A disulfide bridge links cysteine 833 with cysteine 890. Fibronectin type-III domains lie at methionine 913–glutamate 1007, lysine 1012–glutamine 1116, proline 1117–aspartate 1213, and alanine 1217–glutamine 1310. Asparagine 1022, asparagine 1055, and asparagine 1186 each carry an N-linked (GlcNAc...) asparagine glycan. Residues proline 1312 to threonine 1394 enclose the Ig-like C2-type 10 domain. The cysteines at positions 1334 and 1382 are disulfide-linked. Fibronectin type-III domains follow at residues proline 1402–glutamine 1495 and leucine 1499–threonine 1594. A helical transmembrane segment spans residues leucine 1619–isoleucine 1639. Topologically, residues leucine 1640–valine 2016 are cytoplasmic. A PXXP motif 1; SH3-binding motif is present at residues proline 1685–proline 1688. The segment at proline 1688 to asparagine 1719 is disordered. Residues proline 1727–proline 1730 carry the PXXP motif 2; SH3-binding motif. 2 disordered regions span residues glycine 1787–alanine 1846 and serine 1862–valine 2016. A compositionally biased stretch (polar residues) spans lysine 1826–tyrosine 1836. Positions tyrosine 1842–proline 1845 match the YXXP motif 1; potential SH2-binding motif. A YXXP motif 2; potential SH2-binding motif is present at residues tyrosine 1875–proline 1878. A compositionally biased stretch (low complexity) spans glycine 1897–arginine 1918. The short motif at proline 1925–proline 1932 is the Polyproline tract (probable SH3-binding) element. Basic and acidic residues-rich tracts occupy residues aspartate 1944–proline 1962 and glutamine 1974–threonine 1993. Residues glycine 1994 to asparagine 2004 show a composition bias toward polar residues.

In terms of assembly, homodimer (via extracellular region); alternative splicing produces a potential 19,008 different ectodomains and the majority of these show strong isoform-specific homodimerization. Interacts (via cytoplasmic domain) with dock/dreadlocks (via SH2 and SH3 domains); the interaction is direct and may require Dscam1 to be phosphorylated. Post-translationally, phosphorylated on tyrosine residues in the intracellular domain. Tyrosine protein kinase Src42A and possibly Src64B are involved in this phosphorylation. In terms of processing, glycosylation on Asn-53 and Asn-325 is involved in stabilizing dimerization. Proteolytically processed, probably to generate a secreted form. Secreted into the hemolymph (at protein level). Expressed in brain and eye-antennal imaginal disks, including R3/R4 and R7 photoreceptor cells. Individual R3/R4 cells express between 14 and 50 randomly generated mRNAs encoding distinct isoforms.

It localises to the cell membrane. The protein resides in the cell projection. The protein localises to the neuron projection. It is found in the axon. Its subcellular location is the perikaryon. It localises to the dendrite. The protein resides in the secreted. Cell surface receptor involved in guidance and targeting of growing nerve axons. Required during Bolwig's organ differentiation for accurate and efficient targeting of photoreceptor neuron axons to their synaptic targets in the brain via the P2 intermediate target neuron. Involved in isoneural self-avoidance during dendrite arborization but not in heteroneural recognition and repulsion during tiling by related neurons of the same class. Involved in regulating axon bifurcation and divergent extension in the developing mushroom body. Essential for axon arborisation in ellipsoid body. Exhibits an extraordinary level of molecular diversity resulting from alternative splicing. Isoforms differing in their ectodomain makeup show a high degree of functional redundancy while isoforms with different transmembrane domains are involved in different neuronal morphogenetic processes and are differentially targeted to dendrites or axons. The vast majority of isoforms exhibit strong isoform-specific homophilic binding. Individual cells express a distinct randomly generated repertoire of isoforms. Cell surfaces bearing identical repertoires of Dscam1 isoforms, such as those from the same cell, trigger recognition and avoidance. A subset of isoforms is expressed in fat body cells and hemocytes, cells that are part of the insect immune response, and these isoforms are secreted into the hemolymph. The secreted form comprising the ectodomain can bind to bacteria, such as Escherichia coli, and may act as an opsonin enhancing their phagocytosis by hemocytes. The polypeptide is Cell adhesion molecule Dscam1 (Drosophila melanogaster (Fruit fly)).